The sequence spans 398 residues: ATP-dependent RNA helicase eIF4A (398 aa).

A Q motif motif is present at residues 25-53 (DSFDSMELKPELLRGVYAYGFERPSAIQQ). A Helicase ATP-binding domain is found at 56–226 (ILPIVKGNDV…TKFMRDPVRI (171 aa)). Residue 69 to 76 (AQSGTGKT) coordinates ATP. A DEAD box motif is present at residues 174–177 (DEAD). The region spanning 237–398 (GIKQFYIAVE…EMPMNVADLI (162 aa)) is the Helicase C-terminal domain.

This sequence belongs to the DEAD box helicase family. eIF4A subfamily. Component of the eIF4F complex, which composition varies with external and internal environmental conditions. It is composed of at least eIF4A, eIF4E and eIF4G.

The protein localises to the cytoplasm. It carries out the reaction ATP + H2O = ADP + phosphate + H(+). ATP-dependent RNA helicase which is a subunit of the eIF4F complex involved in cap recognition and is required for mRNA binding to ribosome. In the current model of translation initiation, eIF4A unwinds RNA secondary structures in the 5'-UTR of mRNAs which is necessary to allow efficient binding of the small ribosomal subunit, and subsequent scanning for the initiator codon. The chain is ATP-dependent RNA helicase eIF4A (tif1) from Emericella nidulans (strain FGSC A4 / ATCC 38163 / CBS 112.46 / NRRL 194 / M139) (Aspergillus nidulans).